Here is a 230-residue protein sequence, read N- to C-terminus: Ion-translocating oxidoreductase complex subunit E (230 aa).

The next 5 membrane-spanning stretches (helical) occupy residues 39–59 (LGLGIATLLVLVGSNVTVSLV), 69–89 (IPVFVMIIASLVTCVQLLMNA), 93–113 (GLYLSLGIFIPLIVTNCIIIG), 124–144 (VLPAALDGFWMGLGMTSVLVV), and 182–202 (AFLLALLPPGAFIGVGFLIAA).

The protein belongs to the NqrDE/RnfAE family. The complex is composed of six subunits: RnfA, RnfB, RnfC, RnfD, RnfE and RnfG.

The protein localises to the cell inner membrane. Part of a membrane-bound complex that couples electron transfer with translocation of ions across the membrane. The polypeptide is Ion-translocating oxidoreductase complex subunit E (Vibrio cholerae serotype O1 (strain ATCC 39315 / El Tor Inaba N16961)).